An 89-amino-acid polypeptide reads, in one-letter code: UPF0367 protein CYB_2632 (89 aa).

Residues 69-89 (SKSGSASPMGTRPGFLAQLQS) are disordered.

It belongs to the UPF0367 family.

This is UPF0367 protein CYB_2632 from Synechococcus sp. (strain JA-2-3B'a(2-13)) (Cyanobacteria bacterium Yellowstone B-Prime).